Reading from the N-terminus, the 264-residue chain is 3-methyl-2-oxobutanoate hydroxymethyltransferase (264 aa).

Residues D41 and D80 each coordinate Mg(2+). Residues 41 to 42, D80, and K109 each bind 3-methyl-2-oxobutanoate; that span reads DS. Residue E111 coordinates Mg(2+). Catalysis depends on E178, which acts as the Proton acceptor.

It belongs to the PanB family. In terms of assembly, homodecamer; pentamer of dimers. Requires Mg(2+) as cofactor.

It localises to the cytoplasm. It catalyses the reaction 3-methyl-2-oxobutanoate + (6R)-5,10-methylene-5,6,7,8-tetrahydrofolate + H2O = 2-dehydropantoate + (6S)-5,6,7,8-tetrahydrofolate. It participates in cofactor biosynthesis; (R)-pantothenate biosynthesis; (R)-pantoate from 3-methyl-2-oxobutanoate: step 1/2. Catalyzes the reversible reaction in which hydroxymethyl group from 5,10-methylenetetrahydrofolate is transferred onto alpha-ketoisovalerate to form ketopantoate. In Thermosipho melanesiensis (strain DSM 12029 / CIP 104789 / BI429), this protein is 3-methyl-2-oxobutanoate hydroxymethyltransferase.